The sequence spans 197 residues: Molybdenum cofactor guanylyltransferase (197 aa).

Residues 12–14 (LAG), Lys25, Asn53, Asp71, and Asp101 each bind GTP. Residue Asp101 coordinates Mg(2+).

It belongs to the MobA family. As to quaternary structure, monomer. Mg(2+) serves as cofactor.

The protein localises to the cytoplasm. The enzyme catalyses Mo-molybdopterin + GTP + H(+) = Mo-molybdopterin guanine dinucleotide + diphosphate. Transfers a GMP moiety from GTP to Mo-molybdopterin (Mo-MPT) cofactor (Moco or molybdenum cofactor) to form Mo-molybdopterin guanine dinucleotide (Mo-MGD) cofactor. The polypeptide is Molybdenum cofactor guanylyltransferase (Bordetella pertussis (strain Tohama I / ATCC BAA-589 / NCTC 13251)).